The sequence spans 237 residues: Uridylate kinase (237 aa).

12–15 (KISG) provides a ligand contact to ATP. Position 54 (G54) interacts with UMP. 2 residues coordinate ATP: G55 and R59. UMP-binding positions include D72 and 133–140 (TGNPFFST). Y166 and D169 together coordinate ATP.

This sequence belongs to the UMP kinase family. As to quaternary structure, homohexamer.

The protein localises to the cytoplasm. The catalysed reaction is UMP + ATP = UDP + ADP. Its pathway is pyrimidine metabolism; CTP biosynthesis via de novo pathway; UDP from UMP (UMPK route): step 1/1. Its activity is regulated as follows. Inhibited by UTP. Catalyzes the reversible phosphorylation of UMP to UDP. This Caldanaerobacter subterraneus subsp. tengcongensis (strain DSM 15242 / JCM 11007 / NBRC 100824 / MB4) (Thermoanaerobacter tengcongensis) protein is Uridylate kinase.